Reading from the N-terminus, the 107-residue chain is Replication restart protein PriB (107 aa).

One can recognise an SSB domain in the interval 8–107 (IENRLSLIGV…LHAEHIELLD (100 aa)).

This sequence belongs to the PriB family. As to quaternary structure, homodimer. Interacts with PriA and DnaT. Component of the replication restart primosome. Primosome assembly occurs via a 'hand-off' mechanism. PriA binds to replication forks, subsequently PriB then DnaT bind; DnaT then displaces ssDNA to generate the helicase loading substrate.

Its function is as follows. Involved in the restart of stalled replication forks, which reloads the replicative helicase on sites other than the origin of replication; the PriA-PriB pathway is the major replication restart pathway. During primosome assembly it facilitates complex formation between PriA and DnaT on DNA; stabilizes PriA on DNA. Stimulates the DNA unwinding activity of PriA helicase. The protein is Replication restart protein PriB of Actinobacillus succinogenes (strain ATCC 55618 / DSM 22257 / CCUG 43843 / 130Z).